The primary structure comprises 1183 residues: Putative ATP-dependent RNA helicase PB1A10.06c (1183 aa).

Disordered regions lie at residues 1-92 (MGRL…KKRL) and 165-315 (ETTT…RASR). Residues 60–81 (VPKEERQKRKQELKDQLLKENE) are compositionally biased toward basic and acidic residues. Composition is skewed to low complexity over residues 165–176 (ETTTTKSSTAET) and 184–196 (TRSG…STGT). Acidic residues predominate over residues 224–251 (EDPEYDSAEEDYLSTDSEEFSEDSDNSS). Basic and acidic residues predominate over residues 252-270 (EENKDTNEPSTKDAEKTVP). The segment covering 292–308 (ENEDFDLETSEDDSSDD) has biased composition (acidic residues). The 178-residue stretch at 408 to 585 (MEQIFANDVV…KLLFSVPPPI (178 aa)) folds into the Helicase ATP-binding domain. ATP is bound at residue 421–428 (GATGSGKT). The short motif at 522–525 (DEAH) is the DEAH box element. The Helicase C-terminal domain maps to 611–831 (AFDKVCLIHK…SIVLQMKNMN (221 aa)). Over residues 673–683 (EDLQSETEDID) the composition is skewed to acidic residues. The interval 673 to 696 (EDLQSETEDIDQVPTSSSSSVTYD) is disordered.

It belongs to the DEAD box helicase family. DEAH subfamily.

It localises to the nucleus. The protein resides in the nucleolus. It carries out the reaction ATP + H2O = ADP + phosphate + H(+). The chain is Putative ATP-dependent RNA helicase PB1A10.06c from Schizosaccharomyces pombe (strain 972 / ATCC 24843) (Fission yeast).